The chain runs to 370 residues: Probable neutral protease 2 homolog TRV_02539 (370 aa).

The signal sequence occupies residues 1–19; it reads MQLVAALAALGALVAPAVA. The propeptide occupies 20–188; sequence YPHAPMNETL…SIHSRALQKR (169 aa). 2 disulfides stabilise this stretch: cysteine 196-cysteine 267 and cysteine 274-cysteine 292. Position 316 (histidine 316) interacts with Zn(2+). Glutamate 317 is an active-site residue. Residues histidine 320 and aspartate 331 each coordinate Zn(2+).

It belongs to the peptidase M35 family. Requires Zn(2+) as cofactor.

The protein resides in the secreted. The catalysed reaction is Preferential cleavage of bonds with hydrophobic residues in P1'. Also 3-Asn-|-Gln-4 and 8-Gly-|-Ser-9 bonds in insulin B chain.. Functionally, probable secreted metalloprotease that shows high activities on basic nuclear substrates such as histone and protamine. May be involved in virulence. In Trichophyton verrucosum (strain HKI 0517), this protein is Probable neutral protease 2 homolog TRV_02539.